Reading from the N-terminus, the 179-residue chain is MIRNILKMGDERLLRIAPPVPAEMFGSSELETLIADMFETMHSVGGVGLAAPQIGIDLQLVIFGFERSERYPQAEAVPQTILLNPLITPLHPGVEEGWEGCLSVPGLRGMVDRYQSIRYEGFDPDGQPIERIAHGFHARVVQHECDHLIGRLYPSRITDFSKFGFMDVMFPDMDPNADE.

Fe cation-binding residues include C101 and H143. Residue E144 is part of the active site. H147 contributes to the Fe cation binding site.

This sequence belongs to the polypeptide deformylase family. Fe(2+) serves as cofactor.

It catalyses the reaction N-terminal N-formyl-L-methionyl-[peptide] + H2O = N-terminal L-methionyl-[peptide] + formate. Removes the formyl group from the N-terminal Met of newly synthesized proteins. Requires at least a dipeptide for an efficient rate of reaction. N-terminal L-methionine is a prerequisite for activity but the enzyme has broad specificity at other positions. The chain is Peptide deformylase 2 from Pseudomonas syringae pv. tomato (strain ATCC BAA-871 / DC3000).